A 630-amino-acid polypeptide reads, in one-letter code: Phosphomethylpyrimidine synthase (630 aa).

Residues Asn-227, Met-256, Tyr-285, His-321, 341-343 (SRG), 382-385 (DGLR), and Glu-421 contribute to the substrate site. His-425 is a binding site for Zn(2+). Tyr-448 contributes to the substrate binding site. His-489 provides a ligand contact to Zn(2+). 3 residues coordinate [4Fe-4S] cluster: Cys-569, Cys-572, and Cys-577.

This sequence belongs to the ThiC family. Homodimer. Requires [4Fe-4S] cluster as cofactor.

It catalyses the reaction 5-amino-1-(5-phospho-beta-D-ribosyl)imidazole + S-adenosyl-L-methionine = 4-amino-2-methyl-5-(phosphooxymethyl)pyrimidine + CO + 5'-deoxyadenosine + formate + L-methionine + 3 H(+). The protein operates within cofactor biosynthesis; thiamine diphosphate biosynthesis. Its function is as follows. Catalyzes the synthesis of the hydroxymethylpyrimidine phosphate (HMP-P) moiety of thiamine from aminoimidazole ribotide (AIR) in a radical S-adenosyl-L-methionine (SAM)-dependent reaction. This chain is Phosphomethylpyrimidine synthase, found in Hydrogenovibrio crunogenus (strain DSM 25203 / XCL-2) (Thiomicrospira crunogena).